The sequence spans 302 residues: Large ribosomal subunit protein uL29m (302 aa).

This sequence belongs to the universal ribosomal protein uL29 family. In terms of assembly, component of the mitochondrial large ribosomal subunit. Mature mitochondrial ribosomes consist of a small (37S) and a large (54S) subunit. The 37S subunit contains at least 33 different proteins and 1 molecule of RNA (15S). The 54S subunit contains at least 45 different proteins and 1 molecule of RNA (21S).

The protein localises to the mitochondrion. This Debaryomyces hansenii (strain ATCC 36239 / CBS 767 / BCRC 21394 / JCM 1990 / NBRC 0083 / IGC 2968) (Yeast) protein is Large ribosomal subunit protein uL29m (MRPL4).